The following is a 100-amino-acid chain: Urease subunit gamma (100 aa).

This sequence belongs to the urease gamma subunit family. Heterotrimer of UreA (gamma), UreB (beta) and UreC (alpha) subunits. Three heterotrimers associate to form the active enzyme.

It localises to the cytoplasm. It catalyses the reaction urea + 2 H2O + H(+) = hydrogencarbonate + 2 NH4(+). Its pathway is nitrogen metabolism; urea degradation; CO(2) and NH(3) from urea (urease route): step 1/1. The sequence is that of Urease subunit gamma from Klebsiella pneumoniae.